The primary structure comprises 163 residues: Large ribosomal subunit protein uL11 (163 aa).

It belongs to the universal ribosomal protein uL11 family. Part of the ribosomal stalk of the 50S ribosomal subunit. Interacts with L10 and the large rRNA to form the base of the stalk. L10 forms an elongated spine to which L12 dimers bind in a sequential fashion forming a multimeric L10(L12)X complex.

Its function is as follows. Forms part of the ribosomal stalk which helps the ribosome interact with GTP-bound translation factors. The protein is Large ribosomal subunit protein uL11 of Thermococcus onnurineus (strain NA1).